The chain runs to 241 residues: tRNA pseudouridine synthase B (241 aa).

Residue Asp52 is the Nucleophile of the active site.

The protein belongs to the pseudouridine synthase TruB family. Type 1 subfamily.

It catalyses the reaction uridine(55) in tRNA = pseudouridine(55) in tRNA. In terms of biological role, responsible for synthesis of pseudouridine from uracil-55 in the psi GC loop of transfer RNAs. The polypeptide is tRNA pseudouridine synthase B (Chloroherpeton thalassium (strain ATCC 35110 / GB-78)).